A 147-amino-acid polypeptide reads, in one-letter code: MCAVLDRSMLSVAEISDRLEIQQLLVDYSSAIDQRRFDDLDRVFTPDAYIDYRALGGIDGRYPKIKQWLSQVLGNFPVYAHMLGNFSVRVDGDTASSRVICFNPMVFAGDRQQVLFCGLWYDDDFVRTPDGWRIIRRVETKCFQKMM.

This is an uncharacterized protein from Mycobacterium tuberculosis (strain CDC 1551 / Oshkosh).